The chain runs to 411 residues: Arginine deiminase (411 aa).

Residue C401 is the Amidino-cysteine intermediate of the active site.

This sequence belongs to the arginine deiminase family.

Its subcellular location is the cytoplasm. The catalysed reaction is L-arginine + H2O = L-citrulline + NH4(+). It functions in the pathway amino-acid degradation; L-arginine degradation via ADI pathway; carbamoyl phosphate from L-arginine: step 1/2. This is Arginine deiminase from Staphylococcus aureus (strain JH9).